A 160-amino-acid polypeptide reads, in one-letter code: 3-dehydroquinate dehydratase (160 aa).

The Proton acceptor role is filled by Tyr28. Substrate is bound by residues Asn79, His85, and Asp92. The active-site Proton donor is His105. Substrate-binding positions include 106-107 and Arg116; that span reads MS.

Belongs to the type-II 3-dehydroquinase family. As to quaternary structure, homododecamer.

The enzyme catalyses 3-dehydroquinate = 3-dehydroshikimate + H2O. It participates in metabolic intermediate biosynthesis; chorismate biosynthesis; chorismate from D-erythrose 4-phosphate and phosphoenolpyruvate: step 3/7. Catalyzes a trans-dehydration via an enolate intermediate. The chain is 3-dehydroquinate dehydratase from Gloeobacter violaceus (strain ATCC 29082 / PCC 7421).